The following is a 497-amino-acid chain: Probable malate:quinone oxidoreductase (497 aa).

It belongs to the MQO family. The cofactor is FAD.

The enzyme catalyses (S)-malate + a quinone = a quinol + oxaloacetate. Its pathway is carbohydrate metabolism; tricarboxylic acid cycle; oxaloacetate from (S)-malate (quinone route): step 1/1. The sequence is that of Probable malate:quinone oxidoreductase from Rhodopseudomonas palustris (strain TIE-1).